Reading from the N-terminus, the 507-residue chain is Probable D-lactate dehydrogenase, mitochondrial (507 aa).

A mitochondrion-targeting transit peptide spans 1–52 (MARLLRSATWELFPWRGYCSQKAKGELCRDFVEALKAVVGGSHVSTAAVVRE). Residue Lys-36 is modified to N6-acetyllysine. In terms of domain architecture, FAD-binding PCMH-type spans 62–265 (RCEPPDAVVW…TATTLRLHPA (204 aa)). Position 315 is an N6-acetyllysine (Lys-315). An N6-acetyllysine; alternate modification is found at Lys-358. Lys-358 carries the post-translational modification N6-succinyllysine; alternate. Lys-445 and Lys-472 each carry N6-acetyllysine.

This sequence belongs to the FAD-binding oxidoreductase/transferase type 4 family. In terms of assembly, interacts with CSRP3. It depends on FAD as a cofactor. Expressed moderately in heart and liver and at lower levels in skeletal muscle and kidney.

It is found in the mitochondrion. It catalyses the reaction (R)-lactate + 2 Fe(III)-[cytochrome c] = 2 Fe(II)-[cytochrome c] + pyruvate + 2 H(+). Involved in D-lactate, but not L-lactate catabolic process. This Homo sapiens (Human) protein is Probable D-lactate dehydrogenase, mitochondrial.